Here is a 496-residue protein sequence, read N- to C-terminus: NADP-dependent glyceraldehyde-3-phosphate dehydrogenase (496 aa).

N-acetylalanine is present on A2. T4 carries the phosphothreonine modification. Residues R116 and 169–170 (NY) contribute to the substrate site. Residues K192, T195, and D230 each contribute to the NADP(+) site. 245–249 (GGDTG) lines the NAD(+) pocket. Residue E264 is the Proton acceptor of the active site. 297–299 (RCT) serves as a coordination point for substrate. C298 functions as the Nucleophile in the catalytic mechanism. E391 provides a ligand contact to NADP(+). A substrate-binding site is contributed by R451.

It belongs to the aldehyde dehydrogenase family.

It localises to the cytoplasm. It carries out the reaction D-glyceraldehyde 3-phosphate + NADP(+) + H2O = (2R)-3-phosphoglycerate + NADPH + 2 H(+). Functionally, important as a means of generating NADPH for biosynthetic reactions. This Arabidopsis thaliana (Mouse-ear cress) protein is NADP-dependent glyceraldehyde-3-phosphate dehydrogenase (ALDH11A3).